Here is a 1118-residue protein sequence, read N- to C-terminus: Collagenase ColG (1118 aa).

The N-terminal stretch at 1–45 (MKKNILKILMDSYSKESKIQTVRRVTSVSLLAVYLTMNTSSLVLA) is a signal peptide. Residues 46-110 (KPIENTNDTS…KSKSTLRSAS (65 aa)) constitute a propeptide that is removed on maturation. Positions 111–786 (IANTNSEKYD…QYDVVFHGVL (676 aa)) are S1 metalloprotease domain, degrades both FALGPA (furylacryloyl-Leu-Gly-Pro-Ala) and type I collagen. The activator domain required for full activity on collagen stretch occupies residues 119–388 (YDFEYLNGLS…AMERITWDYD (270 aa)). The catalytic subdomain stretch occupies residues 389–670 (GIGSNGKKVD…IQELADKYQG (282 aa)). A degrades soluble FALGPA peptide (furylacryloyl-Leu-Gly-Pro-Ala) but not type I collagen region spans residues 396 to 1118 (KVDHDKFLDD…SGNYELRVNK (723 aa)). Glu-498 lines the Ca(2+) pocket. His-523 serves as a coordination point for Zn(2+). Glu-524 is an active-site residue. A Zn(2+)-binding site is contributed by His-527. Residues Ala-531, Val-535, and Gly-537 each coordinate Ca(2+). Glu-555 contacts Zn(2+). The tract at residues 679–790 (DYLKDHGYKK…VFHGVLTDNA (112 aa)) is helper subdomain. The interval 787–882 (TDNADISNNK…SFTIEIKNED (96 aa)) is S2 domain. Residues Asn-795, Lys-796, Asp-823, Asp-825, Asp-864, Glu-890, Glu-892, Asn-894, Asp-913, Asp-918, Ala-920, Asp-921, Glu-1009, Glu-1011, Asn-1013, Asp-1014, Ser-1032, Asp-1037, Arg-1039, and Asp-1040 each contribute to the Ca(2+) site. A PKD domain is found at 797–885 (APIAKVTGPS…IEIKNEDTTT (89 aa)). Residues 886–1003 (PITKEMEPND…SYSLNIKGLG (118 aa)) form an S3a collagen-binding domain region. Residues 1008–1118 (KEKENNDSSD…SGNYELRVNK (111 aa)) are S3b collagen-binding domain. Residues 1102–1106 (LVYKY) form a collagen-binding region.

This sequence belongs to the peptidase M9B family. Collagenase subfamily. The cofactor is Ca(2+). It depends on Zn(2+) as a cofactor. In terms of processing, upon purification gives 67 kDa, 78 kDa, 82 kDa and 116 kDa (full-length) proteins all of which have the same N-terminus; only the longest form digests insoluble collagen. At least 2 in vivo isolated forms (C1b and C1c) are missing the second collagen-binding domain, ending on Lys-1006 and Lys-1018 respectively.

The protein resides in the secreted. It carries out the reaction Digestion of native collagen in the triple helical region at Xaa-|-Gly bonds. With synthetic peptides, a preference is shown for Gly at P3 and P1', Pro and Ala at P2 and P2', and hydroxyproline, Ala or Arg at P3'.. With respect to regulation, inhibited by 1-10-phenanthroline. Inhibited by peptidomimetic isoamyl-phosphonyl-Gly-Pro-Ala, which binds to Zn(2+). Inhibited by broad-spectrum zinc metalloprotease inhibitor batimastat. N-aryl mercaptoacetamide-based inhibitors have been isolated that act on clostridial collagenases with submicromolar affinity while having negligibile activity on human collagenases. In terms of biological role, clostridial collagenases are among the most efficient degraders of eukaryotic collagen known; saprophytes use collagen as a carbon source while pathogens additionally digest collagen to aid in host colonization. Has both tripeptidylcarboxypeptidase on Gly-X-Y and endopeptidase activities; the endopeptidase cuts within the triple helix region of collagen while tripeptidylcarboxypeptidase successively digests the exposed ends, thus clostridial collagenases can digest large sections of collagen. Active on soluble type I collagen, insoluble collagen, azocoll, soluble PZ-peptide (all collagenase substrates) and gelatin. The full-length protein has collagenase activity, while the in vivo derived C-terminally truncated shorter versions only act on gelatin. In vitro digestion of soluble calf skin collagen fibrils requires both ColG and ColH; ColG forms missing the second collagen-binding domain are also synergistic with ColH, although their overall efficiency is decreased. The activator domain (residues 119-388) and catalytic subdomain (389-670) open and close around substrate using a Gly-rich hinge (387-397), allowing digestion when the protein is closed. Binding of collagen requires Ca(2+) and is inhibited by EGTA; the collagen-binding domain (CBD, S3a plus S3b) specifically recognizes the triple-helical conformation made by 3 collagen protein chains in the triple-helical region. Isolated CBD (S3a plus S3b) binds collagen fibrils and sheets of many tissues. The polypeptide is Collagenase ColG (Hathewaya histolytica (Clostridium histolyticum)).